A 130-amino-acid polypeptide reads, in one-letter code: ATP synthase epsilon chain (130 aa).

Belongs to the ATPase epsilon chain family. In terms of assembly, F-type ATPases have 2 components, CF(1) - the catalytic core - and CF(0) - the membrane proton channel. CF(1) has five subunits: alpha(3), beta(3), gamma(1), delta(1), epsilon(1). CF(0) has three main subunits: a, b and c.

The protein localises to the cell membrane. In terms of biological role, produces ATP from ADP in the presence of a proton gradient across the membrane. This is ATP synthase epsilon chain from Nocardia farcinica (strain IFM 10152).